The sequence spans 675 residues: DNA ligase (675 aa).

NAD(+) contacts are provided by residues 35 to 39 (DAVYD), 84 to 85 (SL), and E118. Catalysis depends on K120, which acts as the N6-AMP-lysine intermediate. NAD(+)-binding residues include R141, E178, K295, and K319. Residues C413, C416, C431, and C436 each contribute to the Zn(2+) site. A BRCT domain is found at 598 to 675 (GAIGALTGQT…DEAELKALLS (78 aa)).

It belongs to the NAD-dependent DNA ligase family. LigA subfamily. The cofactor is Mg(2+). Requires Mn(2+) as cofactor.

It catalyses the reaction NAD(+) + (deoxyribonucleotide)n-3'-hydroxyl + 5'-phospho-(deoxyribonucleotide)m = (deoxyribonucleotide)n+m + AMP + beta-nicotinamide D-nucleotide.. In terms of biological role, DNA ligase that catalyzes the formation of phosphodiester linkages between 5'-phosphoryl and 3'-hydroxyl groups in double-stranded DNA using NAD as a coenzyme and as the energy source for the reaction. It is essential for DNA replication and repair of damaged DNA. This Synechococcus sp. (strain RCC307) protein is DNA ligase.